Here is a 346-residue protein sequence, read N- to C-terminus: Phosphoribosylformylglycinamidine cyclo-ligase (346 aa).

It belongs to the AIR synthase family.

The protein resides in the cytoplasm. It catalyses the reaction 2-formamido-N(1)-(5-O-phospho-beta-D-ribosyl)acetamidine + ATP = 5-amino-1-(5-phospho-beta-D-ribosyl)imidazole + ADP + phosphate + H(+). The protein operates within purine metabolism; IMP biosynthesis via de novo pathway; 5-amino-1-(5-phospho-D-ribosyl)imidazole from N(2)-formyl-N(1)-(5-phospho-D-ribosyl)glycinamide: step 2/2. In Methylobacillus flagellatus (strain ATCC 51484 / DSM 6875 / VKM B-1610 / KT), this protein is Phosphoribosylformylglycinamidine cyclo-ligase.